Here is an 897-residue protein sequence, read N- to C-terminus: 3'-5' exonuclease DinG (897 aa).

One can recognise an Exonuclease domain in the interval 8-161 (VVDLETTGNQ…DEDAATTAKL (154 aa)). In terms of domain architecture, Helicase ATP-binding spans 241 to 496 (SKAVDQLGLT…KAIDQLEKQR (256 aa)). Residue 276–283 (ASLGSGKS) participates in ATP binding. A DEAH box motif is present at residues 448–451 (DEAH). The region spanning 703 to 893 (NIDEYVASIV…QFGKLLRQIQ (191 aa)) is the Helicase C-terminal domain.

Belongs to the helicase family. DinG subfamily. Type 2 sub-subfamily. As to quaternary structure, monomer in solution.

The nuclease activity is inhibited by ATP or ADP. Functionally, 3'-5' exonuclease acting on single-stranded DNA (ssDNA) and RNA (ssRNA) substrates. Displays ssDNA-stimulated ATPase activity, but lacks helicase activity. This is 3'-5' exonuclease DinG from Staphylococcus aureus (strain MRSA252).